Here is a 207-residue protein sequence, read N- to C-terminus: Guanylate kinase (207 aa).

The Guanylate kinase-like domain occupies 4 to 184 (GILFIISAPS…AINDLRTIII (181 aa)). 11–18 (APSGTGKS) contributes to the ATP binding site.

Belongs to the guanylate kinase family.

It localises to the cytoplasm. The catalysed reaction is GMP + ATP = GDP + ADP. Essential for recycling GMP and indirectly, cGMP. This is Guanylate kinase from Buchnera aphidicola subsp. Schizaphis graminum (strain Sg).